A 256-amino-acid chain; its full sequence is Small ribosomal subunit protein uS2 (256 aa).

It belongs to the universal ribosomal protein uS2 family.

The polypeptide is Small ribosomal subunit protein uS2 (Brucella abortus (strain S19)).